The following is a 178-amino-acid chain: MGILKAASSKKNLRPCVIGIDPGLANTGYGIISFSNNRFECIEYGSISTEPHLLQGERLLKIFDKVSELIEKYRPKEAGIETLYFAKNATSAMSVSEARGVVLLALAQGGVRVGEYAPNSIKKAVTGIAQAEKRQVQEAVKLILGLKEIPRPDHAADALAAAITKINLGDVGEVRAYV.

Residues Asp21, Glu81, and His154 contribute to the active site. Residues Asp21, Glu81, and His154 each coordinate Mg(2+).

The protein belongs to the RuvC family. Homodimer which binds Holliday junction (HJ) DNA. The HJ becomes 2-fold symmetrical on binding to RuvC with unstacked arms; it has a different conformation from HJ DNA in complex with RuvA. In the full resolvosome a probable DNA-RuvA(4)-RuvB(12)-RuvC(2) complex forms which resolves the HJ. It depends on Mg(2+) as a cofactor.

Its subcellular location is the cytoplasm. The enzyme catalyses Endonucleolytic cleavage at a junction such as a reciprocal single-stranded crossover between two homologous DNA duplexes (Holliday junction).. In terms of biological role, the RuvA-RuvB-RuvC complex processes Holliday junction (HJ) DNA during genetic recombination and DNA repair. Endonuclease that resolves HJ intermediates. Cleaves cruciform DNA by making single-stranded nicks across the HJ at symmetrical positions within the homologous arms, yielding a 5'-phosphate and a 3'-hydroxyl group; requires a central core of homology in the junction. The consensus cleavage sequence is 5'-(A/T)TT(C/G)-3'. Cleavage occurs on the 3'-side of the TT dinucleotide at the point of strand exchange. HJ branch migration catalyzed by RuvA-RuvB allows RuvC to scan DNA until it finds its consensus sequence, where it cleaves and resolves the cruciform DNA. This is Crossover junction endodeoxyribonuclease RuvC from Treponema denticola (strain ATCC 35405 / DSM 14222 / CIP 103919 / JCM 8153 / KCTC 15104).